Consider the following 172-residue polypeptide: Envelope protein UL45 (172 aa).

At 1–27 the chain is on the intravirion side; sequence MPLRASEHAYRPLGPGTPPVRARLPAA. The chain crosses the membrane as a helical; Signal-anchor for type II membrane protein span at residues 28-48; it reads AWVGVGTIIGGVVIIAALVLV. At 49 to 172 the chain is on the virion surface side; sequence PSRASWALSP…TSTRNALGLP (124 aa).

This sequence belongs to the herpesviridae HHV-1 UL45 family.

It localises to the virion membrane. Its function is as follows. Important virulence factor of HSV neurotropism. Seems to be required for glycoprotein B-induced fusion. Dispensable for growth in vitro. This Homo sapiens (Human) protein is Envelope protein UL45.